We begin with the raw amino-acid sequence, 487 residues long: Vacuolar protein sorting-associated protein 30 (487 aa).

The disordered stretch occupies residues 33-129; sequence PQTLKKSSVP…DNPDAPMGSE (97 aa). Basic and acidic residues predominate over residues 52–62; that stretch reads QSRKSIYDRVS. A compositionally biased stretch (polar residues) spans 81-94; sequence SSMSFVLLSESQMA. Positions 152 to 282 form a coiled coil; sequence VECTEMLVEG…DSQLLEKLQR (131 aa). The tract at residues 283-480 is BARA; the sequence is SNVYNDTFCI…LAHASNVTSN (198 aa). The required for membrane-association, autophagic function during starvation and normal autophagosome morphology stretch occupies residues 456–481; sequence WTKACKLTLTCCKFLLAHASNVTSNA.

It belongs to the beclin family. In terms of assembly, component of the autophagy-specific VPS34 PI3-kinase complex I; and of the VPS34 PI3-kinase complex II.

It is found in the endosome membrane. It localises to the vacuole membrane. The protein resides in the preautophagosomal structure membrane. In terms of biological role, required for cytoplasm to vacuole transport (Cvt), autophagy, nucleophagy, and mitophagy, as a part of the autophagy-specific VPS34 PI3-kinase complex I. This complex is essential to recruit the ATG8-phosphatidylinositol conjugate and the ATG12-ATG5 conjugate to the pre-autophagosomal structure. Also involved in endosome-to-Golgi retrograde transport as part of the VPS34 PI3-kinase complex II. Autophagy is required for proper vegetative growth, asexual/sexual reproduction, and full virulence. Autophagy is particularly involved in the biosynthesis of deoxynivalenol (DON), an important virulence determinant. The protein is Vacuolar protein sorting-associated protein 30 of Gibberella zeae (strain ATCC MYA-4620 / CBS 123657 / FGSC 9075 / NRRL 31084 / PH-1) (Wheat head blight fungus).